The sequence spans 122 residues: Large ribosomal subunit protein uL14 (122 aa).

It belongs to the universal ribosomal protein uL14 family. Part of the 50S ribosomal subunit. Forms a cluster with proteins L3 and L19. In the 70S ribosome, L14 and L19 interact and together make contacts with the 16S rRNA in bridges B5 and B8.

Binds to 23S rRNA. Forms part of two intersubunit bridges in the 70S ribosome. This chain is Large ribosomal subunit protein uL14, found in Levilactobacillus brevis (strain ATCC 367 / BCRC 12310 / CIP 105137 / JCM 1170 / LMG 11437 / NCIMB 947 / NCTC 947) (Lactobacillus brevis).